Consider the following 721-residue polypeptide: Polyribonucleotide nucleotidyltransferase (721 aa).

Mg(2+)-binding residues include Asp-486 and Asp-492. The 60-residue stretch at 553–612 folds into the KH domain; the sequence is PKIVQLQIDIDKISLVIGSTGKTVKAITDEFEVKVQIEQNGKIILFGDDDFKMQKAKERI. One can recognise an S1 motif domain in the interval 622–716; the sequence is GEIYEGIVKK…KFGKIDLEVV (95 aa).

This sequence belongs to the polyribonucleotide nucleotidyltransferase family. Mg(2+) is required as a cofactor.

The protein resides in the cytoplasm. The enzyme catalyses RNA(n+1) + phosphate = RNA(n) + a ribonucleoside 5'-diphosphate. Its function is as follows. Involved in mRNA degradation. Catalyzes the phosphorolysis of single-stranded polyribonucleotides processively in the 3'- to 5'-direction. The chain is Polyribonucleotide nucleotidyltransferase from Borrelia garinii subsp. bavariensis (strain ATCC BAA-2496 / DSM 23469 / PBi) (Borreliella bavariensis).